The sequence spans 306 residues: Cilia- and flagella-associated protein 73 (306 aa).

Coiled-coil stretches lie at residues 49–139 (LQAQ…QRLE) and 197–231 (QSEK…WESK).

Belongs to the CFAP73 family.

The protein resides in the cytoplasm. It is found in the cytoskeleton. It localises to the cilium axoneme. Functionally, may play a role in ciliary/flagellar motility by regulating the assembly and the activity of axonemal inner dynein arm. This Mus musculus (Mouse) protein is Cilia- and flagella-associated protein 73.